Consider the following 220-residue polypeptide: Pyridoxine/pyridoxamine 5'-phosphate oxidase (220 aa).

Substrate contacts are provided by residues 13-16 (RVEY) and Lys77. Residues 72–77 (RTVLCK), 87–88 (FT), Lys94, and Gln116 contribute to the FMN site. Tyr134, Arg138, and Ser142 together coordinate substrate. Residues 151–152 (QS) and Trp197 contribute to the FMN site. 203–205 (RVH) contacts substrate. Arg207 is a binding site for FMN.

It belongs to the pyridoxamine 5'-phosphate oxidase family. As to quaternary structure, homodimer. It depends on FMN as a cofactor.

It carries out the reaction pyridoxamine 5'-phosphate + O2 + H2O = pyridoxal 5'-phosphate + H2O2 + NH4(+). It catalyses the reaction pyridoxine 5'-phosphate + O2 = pyridoxal 5'-phosphate + H2O2. The protein operates within cofactor metabolism; pyridoxal 5'-phosphate salvage; pyridoxal 5'-phosphate from pyridoxamine 5'-phosphate: step 1/1. It functions in the pathway cofactor metabolism; pyridoxal 5'-phosphate salvage; pyridoxal 5'-phosphate from pyridoxine 5'-phosphate: step 1/1. Its function is as follows. Catalyzes the oxidation of either pyridoxine 5'-phosphate (PNP) or pyridoxamine 5'-phosphate (PMP) into pyridoxal 5'-phosphate (PLP). This is Pyridoxine/pyridoxamine 5'-phosphate oxidase from Mycobacterium sp. (strain KMS).